A 443-amino-acid polypeptide reads, in one-letter code: Aspartate--tRNA(Asp/Asn) ligase (443 aa).

Glu-175 serves as a coordination point for L-aspartate. The tract at residues 197–200 (QLFK) is aspartate. Arg-219 is an L-aspartate binding site. ATP is bound by residues 219 to 221 (RAE), 227 to 229 (RHL), and Glu-366. Positions 366 and 369 each coordinate Mg(2+). L-aspartate is bound by residues Ser-369 and Arg-373. Residue 414–417 (GCER) participates in ATP binding.

It belongs to the class-II aminoacyl-tRNA synthetase family. Type 2 subfamily. Homodimer. It depends on Mg(2+) as a cofactor.

The protein resides in the cytoplasm. It carries out the reaction tRNA(Asx) + L-aspartate + ATP = L-aspartyl-tRNA(Asx) + AMP + diphosphate. Aspartyl-tRNA synthetase with relaxed tRNA specificity since it is able to aspartylate not only its cognate tRNA(Asp) but also tRNA(Asn). Reaction proceeds in two steps: L-aspartate is first activated by ATP to form Asp-AMP and then transferred to the acceptor end of tRNA(Asp/Asn). The polypeptide is Aspartate--tRNA(Asp/Asn) ligase (Methanococcoides burtonii (strain DSM 6242 / NBRC 107633 / OCM 468 / ACE-M)).